A 557-amino-acid polypeptide reads, in one-letter code: Formate--tetrahydrofolate ligase 2 (557 aa).

ATP is bound at residue 66–73 (TPAGEGKT).

This sequence belongs to the formate--tetrahydrofolate ligase family.

It catalyses the reaction (6S)-5,6,7,8-tetrahydrofolate + formate + ATP = (6R)-10-formyltetrahydrofolate + ADP + phosphate. It functions in the pathway one-carbon metabolism; tetrahydrofolate interconversion. This chain is Formate--tetrahydrofolate ligase 2, found in Streptococcus pyogenes serotype M3 (strain ATCC BAA-595 / MGAS315).